The following is a 164-amino-acid chain: Telomerase-associated protein of 19 kDa (164 aa).

As to quaternary structure, component of the telomerase holoenzyme complex, composed of the catalytic core (the catalytic subunit TERT, the telomerase RNA template component TER and TAP65/p65), which is associated with two heterotrimeric subcomplexes: (i) the replication protein A (RPA)-related subcomplex, composed of TEB1, RPA2/TEB2 and RPA3/TEB3 and (ii) the CST-like subcomplex, composed of TAP75/p75, TAP45/p45 and TAP19/p19. TEB1 and the CST-like subcomplex are tethered to the catalytic core by TAP50/p50.

Its subcellular location is the chromosome. It is found in the telomere. Component of a CST-like subcomplex of the holoenzyme telomerase ribonucleoprotein complex, which stimulates telomerase complementary-strand synthesis. Telomerase is an essential ribonucleoprotein enzyme that copies new telomeric repeats onto chromosome ends by repetitively synthesizing the short telomere-repeat sequence 5'-TTGGGG-3' using an RNA template component TER. The CST-like subcomplex (also named 7-4-1) binds telomeric single-stranded DNA and coordinates telomere G-strand and C-strand synthesis. The chain is Telomerase-associated protein of 19 kDa from Tetrahymena thermophila (strain SB210).